A 235-amino-acid chain; its full sequence is Ubiquinone biosynthesis O-methyltransferase (235 aa).

Arginine 36, glycine 56, aspartate 77, and methionine 122 together coordinate S-adenosyl-L-methionine.

The protein belongs to the methyltransferase superfamily. UbiG/COQ3 family.

The enzyme catalyses a 3-demethylubiquinol + S-adenosyl-L-methionine = a ubiquinol + S-adenosyl-L-homocysteine + H(+). It carries out the reaction a 3-(all-trans-polyprenyl)benzene-1,2-diol + S-adenosyl-L-methionine = a 2-methoxy-6-(all-trans-polyprenyl)phenol + S-adenosyl-L-homocysteine + H(+). It participates in cofactor biosynthesis; ubiquinone biosynthesis. Functionally, O-methyltransferase that catalyzes the 2 O-methylation steps in the ubiquinone biosynthetic pathway. The chain is Ubiquinone biosynthesis O-methyltransferase from Leptothrix cholodnii (strain ATCC 51168 / LMG 8142 / SP-6) (Leptothrix discophora (strain SP-6)).